Reading from the N-terminus, the 266-residue chain is 5'-nucleotidase SurE (266 aa).

The a divalent metal cation site is built by Asp8, Asp9, Ser42, and Asn98.

The protein belongs to the SurE nucleotidase family. A divalent metal cation is required as a cofactor.

It localises to the cytoplasm. It carries out the reaction a ribonucleoside 5'-phosphate + H2O = a ribonucleoside + phosphate. Nucleotidase that shows phosphatase activity on nucleoside 5'-monophosphates. This Methanocaldococcus jannaschii (strain ATCC 43067 / DSM 2661 / JAL-1 / JCM 10045 / NBRC 100440) (Methanococcus jannaschii) protein is 5'-nucleotidase SurE.